The primary structure comprises 412 residues: MSIEIKNTGVKKVVLAYSGGLDTSAIIPWLKENYDNCEIIAFCADVGQGEEELVGLTEKALASGASECHIVDLKEEFVKEYIYPTIASGAIYEGTYLLGTSMARPIIAKAQVEVARKVGADALCHGCTGKGNDQVRFEGCFAALAPDLKVIAPWREWTMQSREDLLAYLAERDIKTSASATKIYSRDANAFHISHEGGELEDPWNEPSKGVWTLTAAPEDAPNKPEYVSLEVEHGRITKVNGEALTPYAALMTLNAIAAPHGVGRIDITENRLVGMKSRGCYETPGGTVMFAALRAIEELVLDKTSRNWREQVAAQMAHLVYDGRWFTPLCKSLLAASESLAESVNGEVVVKLYKGQATAVKKRSPNSLYSEAFATFGEDQVYDQKHAEGFIRLYSLASRIRALNANDVKSK.

ATP is bound by residues 16 to 24 and Ala-44; that span reads AYSGGLDTS. Residues Tyr-96 and Ser-101 each coordinate L-citrulline. Gly-126 serves as a coordination point for ATP. L-aspartate-binding residues include Thr-128, Asn-132, and Asp-133. Asn-132 lines the L-citrulline pocket. L-citrulline contacts are provided by Arg-136, Ser-185, Ser-194, Glu-270, and Tyr-282.

Belongs to the argininosuccinate synthase family. Type 1 subfamily. As to quaternary structure, homotetramer.

It is found in the cytoplasm. The enzyme catalyses L-citrulline + L-aspartate + ATP = 2-(N(omega)-L-arginino)succinate + AMP + diphosphate + H(+). Its pathway is amino-acid biosynthesis; L-arginine biosynthesis; L-arginine from L-ornithine and carbamoyl phosphate: step 2/3. This is Argininosuccinate synthase from Shewanella baltica (strain OS195).